The following is a 365-amino-acid chain: 3-isopropylmalate dehydrogenase (365 aa).

Arg96, Arg106, Arg134, and Asp224 together coordinate substrate. Asp224, Asp248, and Asp252 together coordinate Mg(2+). Position 288 to 300 (288 to 300 (GSAPTIAKQNIAN)) interacts with NAD(+).

This sequence belongs to the isocitrate and isopropylmalate dehydrogenases family. LeuB type 1 subfamily. In terms of assembly, homodimer. Requires Mg(2+) as cofactor. The cofactor is Mn(2+).

The protein localises to the cytoplasm. It catalyses the reaction (2R,3S)-3-isopropylmalate + NAD(+) = 4-methyl-2-oxopentanoate + CO2 + NADH. The protein operates within amino-acid biosynthesis; L-leucine biosynthesis; L-leucine from 3-methyl-2-oxobutanoate: step 3/4. Catalyzes the oxidation of 3-carboxy-2-hydroxy-4-methylpentanoate (3-isopropylmalate) to 3-carboxy-4-methyl-2-oxopentanoate. The product decarboxylates to 4-methyl-2 oxopentanoate. The sequence is that of 3-isopropylmalate dehydrogenase from Dehalococcoides mccartyi (strain CBDB1).